Here is a 144-residue protein sequence, read N- to C-terminus: D-aminoacyl-tRNA deacylase (144 aa).

The Gly-cisPro motif, important for rejection of L-amino acids signature appears at 136 to 137 (GP).

Belongs to the DTD family. As to quaternary structure, homodimer.

Its subcellular location is the cytoplasm. It carries out the reaction glycyl-tRNA(Ala) + H2O = tRNA(Ala) + glycine + H(+). The enzyme catalyses a D-aminoacyl-tRNA + H2O = a tRNA + a D-alpha-amino acid + H(+). Functionally, an aminoacyl-tRNA editing enzyme that deacylates mischarged D-aminoacyl-tRNAs. Also deacylates mischarged glycyl-tRNA(Ala), protecting cells against glycine mischarging by AlaRS. Acts via tRNA-based rather than protein-based catalysis; rejects L-amino acids rather than detecting D-amino acids in the active site. By recycling D-aminoacyl-tRNA to D-amino acids and free tRNA molecules, this enzyme counteracts the toxicity associated with the formation of D-aminoacyl-tRNA entities in vivo and helps enforce protein L-homochirality. This is D-aminoacyl-tRNA deacylase from Vibrio parahaemolyticus serotype O3:K6 (strain RIMD 2210633).